Consider the following 238-residue polypeptide: Uridylate kinase (238 aa).

10–13 contributes to the ATP binding site; that stretch reads KFSG. The segment at 18–23 is involved in allosteric activation by GTP; it reads GGNGFG. Residue Gly52 coordinates UMP. Residues Gly53 and Arg57 each contribute to the ATP site. Residues Asp73 and 134–141 contribute to the UMP site; that span reads TGNPFFTT. 3 residues coordinate ATP: Thr161, Tyr167, and Asp170.

Belongs to the UMP kinase family. Homohexamer.

The protein localises to the cytoplasm. The catalysed reaction is UMP + ATP = UDP + ADP. The protein operates within pyrimidine metabolism; CTP biosynthesis via de novo pathway; UDP from UMP (UMPK route): step 1/1. With respect to regulation, allosterically activated by GTP. Inhibited by UTP. Functionally, catalyzes the reversible phosphorylation of UMP to UDP. The polypeptide is Uridylate kinase (Campylobacter fetus subsp. fetus (strain 82-40)).